The following is a 327-amino-acid chain: GPI-linked NAD(P)(+)--arginine ADP-ribosyltransferase 1 (327 aa).

An N-terminal signal peptide occupies residues Met-1–Ala-22. 2 disulfide bridges follow: Cys-53–Cys-277 and Cys-174–Cys-224. Residue Asn-65 is glycosylated (N-linked (GlcNAc...) asparagine). Residues Lys-73 to Ser-273 enclose the TR mART core domain. Residues Tyr-121 and Arg-179 each coordinate NAD(+). Residues Arg-179 and Ser-202 contribute to the active site. Ser-233 lines the NAD(+) pocket. Glu-240 is a catalytic residue. The N-linked (GlcNAc...) asparagine glycan is linked to Asn-253. Residue Ser-295 is the site of GPI-anchor amidated serine attachment. A propeptide spans Ala-296–Phe-327 (removed in mature form).

It belongs to the Arg-specific ADP-ribosyltransferase family. Primarily in skeletal and cardiac muscle.

Its subcellular location is the sarcoplasmic reticulum membrane. It catalyses the reaction L-arginyl-[protein] + NAD(+) = N(omega)-(ADP-D-ribosyl)-L-arginyl-[protein] + nicotinamide + H(+). In terms of biological role, has ADP-ribosyltransferase activity toward GLP1R. The sequence is that of GPI-linked NAD(P)(+)--arginine ADP-ribosyltransferase 1 (ART1) from Oryctolagus cuniculus (Rabbit).